Reading from the N-terminus, the 433-residue chain is 3-phosphoshikimate 1-carboxyvinyltransferase (433 aa).

The 3-phosphoshikimate site is built by Lys-22, Ser-23, and Arg-27. A phosphoenolpyruvate-binding site is contributed by Lys-22. Phosphoenolpyruvate-binding residues include Gly-95 and Arg-123. 4 residues coordinate 3-phosphoshikimate: Ser-167, Gln-169, Asp-315, and Lys-342. Gln-169 lines the phosphoenolpyruvate pocket. The Proton acceptor role is filled by Asp-315. Phosphoenolpyruvate-binding residues include Arg-346 and Arg-387.

The protein belongs to the EPSP synthase family. As to quaternary structure, monomer.

It is found in the cytoplasm. The enzyme catalyses 3-phosphoshikimate + phosphoenolpyruvate = 5-O-(1-carboxyvinyl)-3-phosphoshikimate + phosphate. The protein operates within metabolic intermediate biosynthesis; chorismate biosynthesis; chorismate from D-erythrose 4-phosphate and phosphoenolpyruvate: step 6/7. In terms of biological role, catalyzes the transfer of the enolpyruvyl moiety of phosphoenolpyruvate (PEP) to the 5-hydroxyl of shikimate-3-phosphate (S3P) to produce enolpyruvyl shikimate-3-phosphate and inorganic phosphate. The polypeptide is 3-phosphoshikimate 1-carboxyvinyltransferase (Legionella pneumophila (strain Paris)).